The chain runs to 197 residues: Imidazoleglycerol-phosphate dehydratase (197 aa).

Belongs to the imidazoleglycerol-phosphate dehydratase family.

It localises to the cytoplasm. The enzyme catalyses D-erythro-1-(imidazol-4-yl)glycerol 3-phosphate = 3-(imidazol-4-yl)-2-oxopropyl phosphate + H2O. Its pathway is amino-acid biosynthesis; L-histidine biosynthesis; L-histidine from 5-phospho-alpha-D-ribose 1-diphosphate: step 6/9. This is Imidazoleglycerol-phosphate dehydratase from Marinobacter nauticus (strain ATCC 700491 / DSM 11845 / VT8) (Marinobacter aquaeolei).